The chain runs to 73 residues: Acyl carrier protein (73 aa).

The Carrier domain occupies 1-73 (MAVFEKVQDI…DLVKYVENNK (73 aa)). At Ser-35 the chain carries O-(pantetheine 4'-phosphoryl)serine.

This sequence belongs to the acyl carrier protein (ACP) family. 4'-phosphopantetheine is transferred from CoA to a specific serine of apo-ACP by AcpS. This modification is essential for activity because fatty acids are bound in thioester linkage to the sulfhydryl of the prosthetic group.

The protein resides in the cytoplasm. Its pathway is lipid metabolism; fatty acid biosynthesis. Functionally, carrier of the growing fatty acid chain in fatty acid biosynthesis. The protein is Acyl carrier protein of Lactococcus lactis subsp. lactis (strain IL1403) (Streptococcus lactis).